Consider the following 617-residue polypeptide: pH-sensitive chloride channel 2 (617 aa).

Residues 1 to 28 (MHSPGAAAYVFLQCLVALVAAVIAQSGA) form the signal peptide. The Extracellular portion of the chain corresponds to 29–387 (DQPPTTVVEV…VHLAREMGFY (359 aa)). The N-linked (GlcNAc...) asparagine glycan is linked to N57. The segment covering 82-96 (TVSVDSSSTTTVAST) has biased composition (low complexity). The segment at 82–110 (TVSVDSSSTTTVASTQEPTSTTERTMSPE) is disordered. The span at 97–106 (QEPTSTTERT) shows a compositional bias: polar residues. N-linked (GlcNAc...) asparagine glycosylation occurs at N130. The segment covering 131–147 (ATDDNRPDAKSSGKDSE) has biased composition (basic and acidic residues). The segment at 131–155 (ATDDNRPDAKSSGKDSECPTLEGAD) is disordered. N-linked (GlcNAc...) asparagine glycans are attached at residues N184, N234, N351, and N370. The helical transmembrane segment at 388 to 408 (MMDYFIPSIMLVAISWVTFWL) threads the bilayer. At 409 to 414 (QADQSA) the chain is on the cytoplasmic side. The chain crosses the membrane as a helical span at residues 415-434 (PRITLGTSTMLTFITLASAQ). The Extracellular segment spans residues 435-447 (GKTLPKVSYIKAS). Residues 448 to 468 (EIWFLGCTGFIFGSLVEFAFV) traverse the membrane as a helical segment. Over 469 to 596 (NTIWRRKRNV…VAIWIDKRSR (128 aa)) the chain is Cytoplasmic. A helical membrane pass occupies residues 597-617 (FVFPIAFVIFNIFYWTFVYYV).

The protein belongs to the ligand-gated ion channel (TC 1.A.9) family.

It localises to the cell membrane. The enzyme catalyses chloride(in) = chloride(out). Functionally, ligand and pH-gated channel that mediates chloride transport in the mid-gut and thereby may function in larval metabolism and fluid homeostasis. Channel opening is triggered by zinc binding or, to a lesser extent, an increase in extracellular pH. The sequence is that of pH-sensitive chloride channel 2 from Anopheles gambiae (African malaria mosquito).